Consider the following 308-residue polypeptide: Phosphoribosylaminoimidazole-succinocarboxamide synthase (308 aa).

It belongs to the SAICAR synthetase family.

It catalyses the reaction 5-amino-1-(5-phospho-D-ribosyl)imidazole-4-carboxylate + L-aspartate + ATP = (2S)-2-[5-amino-1-(5-phospho-beta-D-ribosyl)imidazole-4-carboxamido]succinate + ADP + phosphate + 2 H(+). Its pathway is purine metabolism; IMP biosynthesis via de novo pathway; 5-amino-1-(5-phospho-D-ribosyl)imidazole-4-carboxamide from 5-amino-1-(5-phospho-D-ribosyl)imidazole-4-carboxylate: step 1/2. This Stenotrophomonas maltophilia (strain R551-3) protein is Phosphoribosylaminoimidazole-succinocarboxamide synthase.